Here is a 966-residue protein sequence, read N- to C-terminus: RNA polymerase-associated protein RapA (966 aa).

The 175-residue stretch at 163–337 folds into the Helicase ATP-binding domain; that stretch reads EVGQRLHPRV…FARLKLLDAD (175 aa). 176–183 contacts ATP; that stretch reads DEVGLGKT. The short motif at 283 to 286 is the DEAH box element; sequence DEAH. Residues 488-642 enclose the Helicase C-terminal domain; sequence RVEWLITFLK…ICPMGMALFE (155 aa).

The protein belongs to the SNF2/RAD54 helicase family. RapA subfamily. Interacts with the RNAP. Has a higher affinity for the core RNAP than for the holoenzyme. Its ATPase activity is stimulated by binding to RNAP.

Transcription regulator that activates transcription by stimulating RNA polymerase (RNAP) recycling in case of stress conditions such as supercoiled DNA or high salt concentrations. Probably acts by releasing the RNAP, when it is trapped or immobilized on tightly supercoiled DNA. Does not activate transcription on linear DNA. Probably not involved in DNA repair. The chain is RNA polymerase-associated protein RapA from Actinobacillus succinogenes (strain ATCC 55618 / DSM 22257 / CCUG 43843 / 130Z).